A 384-amino-acid polypeptide reads, in one-letter code: Chaperone protein DnaJ (384 aa).

The region spanning 5 to 70 (DYYEILGVTR…QKKRIYDTYG (66 aa)) is the J domain. The segment at 134-212 (GTEKEIRLQT…CNGQGRTRQS (79 aa)) adopts a CR-type zinc-finger fold. Zn(2+)-binding residues include Cys-147, Cys-150, Cys-164, Cys-167, Cys-186, Cys-189, Cys-200, and Cys-203. CXXCXGXG motif repeat units lie at residues 147 to 154 (CEECNGSG), 164 to 171 (CPVCQGSG), 186 to 193 (CTRCQGMG), and 200 to 207 (CKTCNGQG). The tract at residues 352-384 (KEKSGEKVRKWPWSKRKDREKKSMAESTREART) is disordered.

It belongs to the DnaJ family. Homodimer. It depends on Zn(2+) as a cofactor.

The protein resides in the cytoplasm. In terms of biological role, participates actively in the response to hyperosmotic and heat shock by preventing the aggregation of stress-denatured proteins and by disaggregating proteins, also in an autonomous, DnaK-independent fashion. Unfolded proteins bind initially to DnaJ; upon interaction with the DnaJ-bound protein, DnaK hydrolyzes its bound ATP, resulting in the formation of a stable complex. GrpE releases ADP from DnaK; ATP binding to DnaK triggers the release of the substrate protein, thus completing the reaction cycle. Several rounds of ATP-dependent interactions between DnaJ, DnaK and GrpE are required for fully efficient folding. Also involved, together with DnaK and GrpE, in the DNA replication of plasmids through activation of initiation proteins. This Syntrophobacter fumaroxidans (strain DSM 10017 / MPOB) protein is Chaperone protein DnaJ.